A 351-amino-acid polypeptide reads, in one-letter code: Peptide chain release factor 1 (351 aa).

Gln-229 is modified (N5-methylglutamine).

It belongs to the prokaryotic/mitochondrial release factor family. In terms of processing, methylated by PrmC. Methylation increases the termination efficiency of RF1.

The protein resides in the cytoplasm. Its function is as follows. Peptide chain release factor 1 directs the termination of translation in response to the peptide chain termination codons UAG and UAA. The chain is Peptide chain release factor 1 from Cereibacter sphaeroides (strain ATCC 17023 / DSM 158 / JCM 6121 / CCUG 31486 / LMG 2827 / NBRC 12203 / NCIMB 8253 / ATH 2.4.1.) (Rhodobacter sphaeroides).